The primary structure comprises 109 residues: Large ribosomal subunit protein uL22 (109 aa).

Belongs to the universal ribosomal protein uL22 family. As to quaternary structure, part of the 50S ribosomal subunit.

This protein binds specifically to 23S rRNA; its binding is stimulated by other ribosomal proteins, e.g. L4, L17, and L20. It is important during the early stages of 50S assembly. It makes multiple contacts with different domains of the 23S rRNA in the assembled 50S subunit and ribosome. Its function is as follows. The globular domain of the protein is located near the polypeptide exit tunnel on the outside of the subunit, while an extended beta-hairpin is found that lines the wall of the exit tunnel in the center of the 70S ribosome. This is Large ribosomal subunit protein uL22 from Cupriavidus metallidurans (strain ATCC 43123 / DSM 2839 / NBRC 102507 / CH34) (Ralstonia metallidurans).